Here is a 151-residue protein sequence, read N- to C-terminus: UPF0208 membrane protein YPTB2595 (151 aa).

2 consecutive transmembrane segments (helical) span residues 46 to 66 and 69 to 89; these read FGIR…IALG and LGPA…GLWW.

It belongs to the UPF0208 family.

The protein localises to the cell inner membrane. This Yersinia pseudotuberculosis serotype I (strain IP32953) protein is UPF0208 membrane protein YPTB2595.